Here is a 703-residue protein sequence, read N- to C-terminus: MARDLLLEVGAEEIPASFIGPALDDLKRVITERMADARLKHGEVRTFGTPRRLAVWVKDVADAGEDIIKEVLGPSAKAAFDAQGKPTKAAEKFAESLKLAVDQLGRATTAKGEYLSARVEEKGRPAADILKDTLHAAVHGINFRKSMRWGDVDTSFARPVQWLVALLGSDVLPVVFGDVTSGRTTRGHRFLSPDAIELKAPAEYEVALEKAHVVADITKRRAQLVEKVRAAASKAGAQLLEDESLVDQVTNLVELPSPVVGTFEERHLDLPPEVLVQEMKSHQRYFSLVDSAGKLQPKFIAVSNTPVRDEQLSLRGYQRVLRARLADGRFFFDEDRKTPLIDRVEKLGRVVWQGQLGSYLEKVERFRTLAVWLGQEAGRAGEAATIERAATLAKADLVTGMVGEFPELQGIMGREYARAGGEPDAVALAIAEHYLPRGAEDALPTQDPGALIGIADRLDSLCGIFAIGKAPTGAADPFALRRACIAIIRLVLGRGYRFSLSAAVDESLRLLAPKIANAKRKAGEPAPREQVLEFFRGRLKALWGEQHRTDVVEAVLSAGFDDLVAAQKRLEALSHIVGRADFQPLAVAFKRVVNIVEKQGRDVQGGETNPQKLVDEPERNLHTAFTQARSTVSGLVRVDDFSGALREITGLKPAVDTFFDKVMVMAEDKALRENRIRLLVEIGALFNQVADFSKIQAETAAAA.

It belongs to the class-II aminoacyl-tRNA synthetase family. In terms of assembly, tetramer of two alpha and two beta subunits.

It is found in the cytoplasm. The catalysed reaction is tRNA(Gly) + glycine + ATP = glycyl-tRNA(Gly) + AMP + diphosphate. The sequence is that of Glycine--tRNA ligase beta subunit from Myxococcus xanthus (strain DK1622).